The chain runs to 909 residues: UPF0182 protein Moth_1139 (909 aa).

Helical transmembrane passes span 8–28 (FCLLIIIPGFLVAAYLGSHFL), 51–71 (VGIRLGTIAFFFLFFYLNLLF), 103–123 (LGILYLLLSLAGALIFSPLAA), 165–185 (LLITAVVGAVLVTGFFYFIFN), 201–221 (LVHFSTLVALLFLIQAWGFRL), 245–265 (LLPGYNILGWVAVACGLIIVL), and 277–297 (AGILSFMAAYFLLVIAVPLAV). A disordered region spans residues 843 to 862 (PAPAASPQPPSQAATGSPGN).

Belongs to the UPF0182 family.

The protein resides in the cell membrane. The polypeptide is UPF0182 protein Moth_1139 (Moorella thermoacetica (strain ATCC 39073 / JCM 9320)).